A 237-amino-acid polypeptide reads, in one-letter code: 4-hydroxy-tetrahydrodipicolinate reductase (237 aa).

NAD(+) is bound by residues 11–16 (GASGRM), 92–94 (GTT), and 116–119 (GSNF). The active-site Proton donor/acceptor is the histidine 148. Histidine 149 is a binding site for (S)-2,3,4,5-tetrahydrodipicolinate. The active-site Proton donor is the lysine 152. Position 158–159 (158–159 (GS)) interacts with (S)-2,3,4,5-tetrahydrodipicolinate.

Belongs to the DapB family.

It localises to the cytoplasm. It carries out the reaction (S)-2,3,4,5-tetrahydrodipicolinate + NAD(+) + H2O = (2S,4S)-4-hydroxy-2,3,4,5-tetrahydrodipicolinate + NADH + H(+). The catalysed reaction is (S)-2,3,4,5-tetrahydrodipicolinate + NADP(+) + H2O = (2S,4S)-4-hydroxy-2,3,4,5-tetrahydrodipicolinate + NADPH + H(+). Its pathway is amino-acid biosynthesis; L-lysine biosynthesis via DAP pathway; (S)-tetrahydrodipicolinate from L-aspartate: step 4/4. In terms of biological role, catalyzes the conversion of 4-hydroxy-tetrahydrodipicolinate (HTPA) to tetrahydrodipicolinate. The chain is 4-hydroxy-tetrahydrodipicolinate reductase from Xylella fastidiosa (strain M12).